We begin with the raw amino-acid sequence, 437 residues long: Peptidyl-prolyl cis-trans isomerase CYP38, chloroplastic (437 aa).

A chloroplast-targeting transit peptide spans 1–36; sequence MAAAFASLPTFSVVNSSRFPRRRIGFSCSKKPLEVR. Residues 37-92 constitute a thylakoid transit peptide; it reads CSSGNTRYTKQRGAFTSLKECAISLALSVGLMVSVPSIALPPNAHAVANPVIPDVS. One can recognise a PPIase cyclophilin-type domain in the interval 245–437; that stretch reads VKIKDNPNIE…LANPSYKIAG (193 aa).

Ubiquitous. Lower levels of expression in roots.

It localises to the plastid. The protein localises to the chloroplast thylakoid lumen. It carries out the reaction [protein]-peptidylproline (omega=180) = [protein]-peptidylproline (omega=0). In terms of biological role, required for the assembly and stabilization of PSII, but has no PPIases activity. The polypeptide is Peptidyl-prolyl cis-trans isomerase CYP38, chloroplastic (CYP38) (Arabidopsis thaliana (Mouse-ear cress)).